We begin with the raw amino-acid sequence, 153 residues long: Large ribosomal subunit protein uL30 (153 aa).

Belongs to the universal ribosomal protein uL30 family. As to quaternary structure, part of the 50S ribosomal subunit.

The sequence is that of Large ribosomal subunit protein uL30 from Methanosarcina barkeri (strain Fusaro / DSM 804).